A 293-amino-acid polypeptide reads, in one-letter code: MAITAQQVKELRQKTGAGMMDCKKALTETDGDMDKAIDLLREKGIAKAAKKADRIAAEGSTLIKTDGNKGVILEVNSETDFVAKNEGFKELLNTLADHLLANAPADLEEAMGQKMENGSTVEEYITSNVAKIGEKITLRRFAVISKEDSEAFGAYLHMGGRIGVLSVLSGTTDEDLAKDIAMHVAAVNPRYISRDQVSEEEANHERQILTQQALQEGKPENIVAKMVEGRLNKFFEEICLLDQAFVKNPDEKVKQVVAAKNASVKTYVRYEVGEGIEKRQENFAEEVMNQVKK.

The tract at residues Thr79–Val82 is involved in Mg(2+) ion dislocation from EF-Tu.

The protein belongs to the EF-Ts family.

It localises to the cytoplasm. Associates with the EF-Tu.GDP complex and induces the exchange of GDP to GTP. It remains bound to the aminoacyl-tRNA.EF-Tu.GTP complex up to the GTP hydrolysis stage on the ribosome. The protein is Elongation factor Ts of Bacillus velezensis (strain DSM 23117 / BGSC 10A6 / LMG 26770 / FZB42) (Bacillus amyloliquefaciens subsp. plantarum).